The sequence spans 68 residues: Large ribosomal subunit protein uL29 (68 aa).

Belongs to the universal ribosomal protein uL29 family.

The polypeptide is Large ribosomal subunit protein uL29 (Streptococcus suis (strain 98HAH33)).